The sequence spans 330 residues: DNA-directed RNA polymerase subunit alpha (330 aa).

The tract at residues 1 to 231 (MQTNLLKPKA…EQLAVFAQLE (231 aa)) is alpha N-terminal domain (alpha-NTD). Residues 250-330 (FDPILLRPVD…NWPPAGLDKR (81 aa)) are alpha C-terminal domain (alpha-CTD).

The protein belongs to the RNA polymerase alpha chain family. In terms of assembly, homodimer. The RNAP catalytic core consists of 2 alpha, 1 beta, 1 beta' and 1 omega subunit. When a sigma factor is associated with the core the holoenzyme is formed, which can initiate transcription.

It catalyses the reaction RNA(n) + a ribonucleoside 5'-triphosphate = RNA(n+1) + diphosphate. Functionally, DNA-dependent RNA polymerase catalyzes the transcription of DNA into RNA using the four ribonucleoside triphosphates as substrates. The sequence is that of DNA-directed RNA polymerase subunit alpha from Acidovorax ebreus (strain TPSY) (Diaphorobacter sp. (strain TPSY)).